Here is a 343-residue protein sequence, read N- to C-terminus: Ferrochelatase (343 aa).

Positions 191 and 270 each coordinate Fe cation.

It belongs to the ferrochelatase family.

The protein resides in the cytoplasm. The catalysed reaction is heme b + 2 H(+) = protoporphyrin IX + Fe(2+). It participates in porphyrin-containing compound metabolism; protoheme biosynthesis; protoheme from protoporphyrin-IX: step 1/1. Its function is as follows. Catalyzes the ferrous insertion into protoporphyrin IX. This is Ferrochelatase from Phenylobacterium zucineum (strain HLK1).